Here is a 794-residue protein sequence, read N- to C-terminus: Zinc finger protein 148 (794 aa).

Lys-6 is covalently cross-linked (Glycyl lysine isopeptide (Lys-Gly) (interchain with G-Cter in SUMO2)). Ser-51 is modified (phosphoserine). Residues Lys-88, Lys-115, and Lys-132 each participate in a glycyl lysine isopeptide (Lys-Gly) (interchain with G-Cter in SUMO2) cross-link. A C2H2-type 1 zinc finger spans residues 171–193 (HVCEHCNAAFRTNYHLQRHVFIH). Phosphothreonine is present on Thr-194. 2 C2H2-type zinc fingers span residues 199–221 (FQCS…EKIH) and 227–249 (FRCD…KRTH). Ser-250 bears the Phosphoserine mark. Residues 255–278 (YQCEYCLQYFSRTDRVLKHKRMCH) form a C2H2-type 4 zinc finger. Lys-291 is covalently cross-linked (Glycyl lysine isopeptide (Lys-Gly) (interchain with G-Cter in SUMO2)). Positions 298–336 (EEDSGFSTSPKDNSLPKKKRQKTEKKSSGMDKESVLDKS) are disordered. Residues Ser-301 and Ser-306 each carry the phosphoserine modification. Residue Lys-308 forms a Glycyl lysine isopeptide (Lys-Gly) (interchain with G-Cter in SUMO2) linkage. A compositionally biased stretch (basic and acidic residues) spans 321–336 (EKKSSGMDKESVLDKS). Lys-356 is covalently cross-linked (Glycyl lysine isopeptide (Lys-Gly) (interchain with G-Cter in SUMO1); alternate). A Glycyl lysine isopeptide (Lys-Gly) (interchain with G-Cter in SUMO2); alternate cross-link involves residue Lys-356. Lys-402 is covalently cross-linked (Glycyl lysine isopeptide (Lys-Gly) (interchain with G-Cter in SUMO2)). Ser-412 bears the Phosphoserine mark. Glycyl lysine isopeptide (Lys-Gly) (interchain with G-Cter in SUMO2) cross-links involve residues Lys-421 and Lys-424. Positions 574 to 588 (NSSDVPEVTQSENVG) are enriched in polar residues. Positions 574–599 (NSSDVPEVTQSENVGSSSQASSSDKA) are disordered. Lys-607 bears the N6-acetyllysine mark. 2 positions are modified to phosphoserine: Ser-665 and Ser-784.

The protein belongs to the krueppel C2H2-type zinc-finger protein family. In terms of assembly, interacts with HNRNPDL. Interacts with the 5FMC complex; the interaction requires association with CHTOP. Interacts with CAVIN1. In terms of processing, sumoylated with SUMO2. Desumoylated by SENP3, resulting in the stimulation of transcription of its target genes. In terms of tissue distribution, strong expression detected in brain, lung, liver and kidney, with lower levels detected in spleen, skeletal muscle, testis and heart.

It localises to the nucleus. In terms of biological role, involved in transcriptional regulation. Represses the transcription of a number of genes including gastrin, stromelysin and enolase. Binds to the G-rich box in the enhancer region of these genes. This is Zinc finger protein 148 (Znf148) from Mus musculus (Mouse).